The primary structure comprises 325 residues: Probable transcription factor At4g01260 (325 aa).

A disordered region spans residues 1–98 (MAPKQLKKIE…SMGEEDVKKK (98 aa)). Composition is skewed to low complexity over residues 23–32 (ASSGESATSG) and 49–69 (KPVV…ESST). Over residues 73-83 (RSFEKTDEMSK) the composition is skewed to basic and acidic residues.

The protein belongs to the GeBP family.

The sequence is that of Probable transcription factor At4g01260 from Arabidopsis thaliana (Mouse-ear cress).